The chain runs to 907 residues: Leucine-rich repeat-containing G-protein coupled receptor 5 (907 aa).

A signal peptide spans 1 to 21 (MDTSRVRMLLSLLALLQLVAA). The Extracellular segment spans residues 22–561 (GSPPRPDTMP…EHLFGSWLIR (540 aa)). The region spanning 33–64 (GCPSYCHCELDGRMLLRVDCSDLGLSELPSNL) is the LRRNT domain. Cystine bridges form between Cys34–Cys40 and Cys38–Cys52. 17 LRR repeats span residues 44 to 64 (GRML…PSNL), 65 to 88 (SVFT…LLHR), 89 to 112 (LRFL…AFAG), 114 to 136 (HSLK…ALQN), 137 to 160 (LRSL…CFSG), 162 to 184 (HSLR…AFRS), 186 to 208 (SALQ…AFGN), 209 to 232 (LSSL…CFDG), 233 to 256 (LHSL…IKTL), 257 to 279 (SNLK…AFVG), 281 to 303 (PSLI…AFQH), 304 to 327 (LPEL…LTGT), 328 to 350 (ATLE…VCDQ), 351 to 375 (LPNL…GCQK), 377 to 396 (QKID…TFQQ), 397 to 420 (LFNL…AFST), and 422 to 444 (PSLI…GLHG). Asn63 and Asn77 each carry an N-linked (GlcNAc...) asparagine glycan. An N-linked (GlcNAc...) asparagine glycan is attached at Asn208. Residues Cys348 and Cys373 are joined by a disulfide bond. Cysteines 479 and 541 form a disulfide. The helical transmembrane segment at 562 to 582 (IGVWTTAVLALSCNALVAFTV) threads the bilayer. Residues 564–585 (VWTTAVLALSCNALVAFTVFRT) form an LRR 18 repeat. The Cytoplasmic segment spans residues 583–595 (FRTPLYISSIKLL). A helical transmembrane segment spans residues 596–616 (IGVIAVVDILMGVSSAILAVV). Residues 617–638 (DTFTFGSFAQHGAWWEGGIGCQ) lie on the Extracellular side of the membrane. Residues Cys637 and Cys712 are joined by a disulfide bond. Residues 639–659 (IVGFLSIFASESSVFLLTLAA) form a helical membrane-spanning segment. At 660 to 682 (LERGFSVKCSSKFEMKAPLSSLK) the chain is on the cytoplasmic side. Residues 683 to 703 (AIILLCVLLALTIATVPLLGG) traverse the membrane as a helical segment. The Extracellular portion of the chain corresponds to 704–723 (SEYNASPLCLPLPFGEPSTT). The chain crosses the membrane as a helical span at residues 724–744 (GYMVALVLLNSLCFLIMTIAY). The Cytoplasmic portion of the chain corresponds to 745 to 775 (TRLYCSLEKGELENLWDCSMVKHTALLLFTN). The helical transmembrane segment at 776–796 (CILYCPVAFLSFSSLLNLTFI) threads the bilayer. Residues 797–802 (SPEVIK) lie on the Extracellular side of the membrane. Residues 803 to 823 (FILLVIVPLPACLNPLLYIVF) form a helical membrane-spanning segment. Residues 824 to 907 (NPHFKEDMGS…LSSVAFVPCL (84 aa)) lie on the Cytoplasmic side of the membrane.

The protein belongs to the G-protein coupled receptor 1 family. As to quaternary structure, identified in a complex composed of RNF43, LGR5 and RSPO1. Also interacts with other R-spondin ligands, including RSPO2, RSPO3 and RSPO4.

The protein resides in the cell membrane. Its subcellular location is the golgi apparatus. The protein localises to the trans-Golgi network membrane. Functionally, receptor for R-spondins that potentiates the canonical Wnt signaling pathway and acts as a stem cell marker of the intestinal epithelium and the hair follicle. Upon binding to R-spondins (RSPO1, RSPO2, RSPO3 or RSPO4), associates with phosphorylated LRP6 and frizzled receptors that are activated by extracellular Wnt receptors, triggering the canonical Wnt signaling pathway to increase expression of target genes. In contrast to classical G-protein coupled receptors, does not activate heterotrimeric G-proteins to transduce the signal. Involved in the development and/or maintenance of the adult intestinal stem cells during postembryonic development. The sequence is that of Leucine-rich repeat-containing G-protein coupled receptor 5 (Lgr5) from Rattus norvegicus (Rat).